We begin with the raw amino-acid sequence, 731 residues long: Auxin response factor 3 (731 aa).

Residues 1-22 (MASSASSSSSPSSRPPLMALPS) show a composition bias toward low complexity. The disordered stretch occupies residues 1–41 (MASSASSSSSPSSRPPLMALPSFYRPPWPSERGGEQRATDC). Positions 191-293 (FCKTLTASDT…ELRLGVRRAT (103 aa)) form a DNA-binding region, TF-B3.

It belongs to the ARF family. In terms of assembly, homo and heterodimers. Expressed in roots, culms, leaves and young panicles.

It localises to the nucleus. Functionally, auxin response factors (ARFs) are transcriptional factors that bind specifically to the DNA sequence 5'-TGTCTC-3' found in the auxin-responsive promoter elements (AuxREs). In Oryza sativa subsp. japonica (Rice), this protein is Auxin response factor 3 (ARF3).